The following is an 85-amino-acid chain: Large ribosomal subunit protein bL27 (85 aa).

The interval 1–21 (MAHKKGVGSSKNGRESESKRL) is disordered.

Belongs to the bacterial ribosomal protein bL27 family.

The sequence is that of Large ribosomal subunit protein bL27 from Porphyromonas gingivalis (strain ATCC 33277 / DSM 20709 / CIP 103683 / JCM 12257 / NCTC 11834 / 2561).